The sequence spans 150 residues: Large ribosomal subunit protein bL9 (150 aa).

This sequence belongs to the bacterial ribosomal protein bL9 family.

In terms of biological role, binds to the 23S rRNA. The chain is Large ribosomal subunit protein bL9 from Shewanella sediminis (strain HAW-EB3).